The chain runs to 1166 residues: MPTSVLWAVDLFGRVYTLSTAGQYWELCKDVQLEFKRVSAATQCCWGIAGDNQVYLYVCSSDVPIRHREEAYENQRWNPMGGFCEKLLPSDRWPWSDVSGLQHRPLDGVALPSPHWEWESDWYVDENFGGEPTEKGGWTYAMDFPATYTRDKKWNSCVRRRKWIRYRRYKSRDSWAKIPSKDDPKELPDPFNDLSVGGWEITEEPVGRLSVWAVSLQGKVWYREDVSHPNPEGSSWSLVETPGEVVQISCGPHDLIWATLWEGQALVREGVCRNNPKGSYWSMVEPPGSENGIMHVSAGVSVVWAITKDRKVWFRRGVNSHNPCGTSWIEMVGEMTMVNVGLNDQVWGISCEDRAVYFRQGVTPSELSGKTWKAIVVGRESDRSHSGSSSSLLSAGCFFGDEVRGSGTESAPSDTDASLEVERQGPEQPLPKEALDNSTNLKGSLSKGHETSGNTDHSTENACLTEGKEKAPETSRSDECRGPASTPAELPWTNIDLKEPKKVSNQPAAGFPETAGLSSLGLFPMGMEEPYGADDHPLWAWVSGGACAVEAGSTLKWFTIQSGLSPSVQTLSLSITPAQTAAWRKQIFQQLTERTKRELESFRHYEQAVEQSVWVKTGALQWWCDWKPHKWVDVRVALEQFTGHDGARDSILFIYYVVHEEKKYLHVFLNEVTVLVPVLNEAKHSFALYTPERTRQRWPVRLAAATEQDMNDWLALLSLSCCESRKVHGRPSPQAIWSVTCKGDIFVSEPSPDLEARERLLPCDQMFWRQMGGHLRIIEANSRGVVWGIGYDHTAWVYTGGYGGGCFQGLASSTSNIYTQSDVKSVYIYENQRWNPVTGYTSRGLPTDRFMWSDVTGLQECTKAGTKPPSLQWTWVSDWYVDFSVPGGTDQEGWQYASDFPASYHGYKTMKDFVRRRCWARKCKLVTSGPWLEVAPITLSDVSIIPESAHADGRGHNVALWAVSDKGDVLCRLGVSELNPAGSSWLHVGTDQPFASVSIGACYQVWAVARDGSAFYRGSVSPSQPAGDCWYHIPSPPKQKLTQVSVGQTSVYALDENGNLWYRAGITPSYPQGSSWEHVSNNVRKVSVGPLDQVWVIANKVQGSHGLSRGTVCRRMGVQPREPKGQGWDYGIGGGWDHISVRANATRVPRNMSRDREARGPGPVCC.

4 TECPR repeats span residues 209–240, 254–285, 301–332, and 344–376; these read LSVW…SLVE, DLIW…SMVE, SVVW…IEMV, and DQVW…KAIV. Phosphoserine occurs at positions 386, 388, 391, 413, and 418. The disordered stretch occupies residues 404-496; that stretch reads RGSGTESAPS…PAELPWTNID (93 aa). Residues 407 to 416 show a composition bias toward polar residues; the sequence is GTESAPSDTD. Over residues 451 to 462 the composition is skewed to polar residues; the sequence is TSGNTDHSTENA. Over residues 466–481 the composition is skewed to basic and acidic residues; sequence EGKEKAPETSRSDECR. A PH domain is found at 616–722; the sequence is KTGALQWWCD…WLALLSLSCC (107 aa). The TECPR 5 repeat unit spans residues 734–761; it reads QAIWSVTCKGDIFVSEPSPDLEARERLL. Residue Ser943 is modified to Phosphoserine. 4 TECPR repeats span residues 958-989, 1003-1034, 1049-1080, and 1092-1132; these read VALW…LHVG, YQVW…YHIP, TSVY…EHVS, and DQVW…DYGI.

The protein belongs to the TECPR1 family. As to quaternary structure, interacts with ATG5; the interaction is direct. Interacts with WIPI2. Interacts with the ATG5-ATG12 conjugate, the interaction is however mutually exclusive with ATG16, since it does not interact with ATG12-ATG5-ATG16 complex.

The protein localises to the cytoplasmic vesicle. Its subcellular location is the autophagosome membrane. The protein resides in the lysosome membrane. Its function is as follows. Tethering factor involved in autophagy. Involved in autophagosome maturation by promoting the autophagosome fusion with lysosomes: acts by associating with both the ATG5-ATG12 conjugate and phosphatidylinositol-3-phosphate (PtdIns(3)P) present at the surface of autophagosomes. Also involved in selective autophagy against bacterial pathogens, by being required for phagophore/preautophagosomal structure biogenesis and maturation. The protein is Tectonin beta-propeller repeat-containing protein 1 (Tecpr1) of Mus musculus (Mouse).